Here is a 551-residue protein sequence, read N- to C-terminus: Sialic acid-binding Ig-like lectin 5 (551 aa).

Positions 1–16 are cleaved as a signal peptide; the sequence is MLPLLLLPLLWGGSLQ. Residues 17 to 441 are Extracellular-facing; the sequence is EKPVYELQVQ…LGTGVVPAAL (425 aa). In terms of domain architecture, Ig-like V-type spans 19–136; the sequence is PVYELQVQKS…KYSYQQNKLN (118 aa). 3 disulfides stabilise this stretch: Cys-36/Cys-170, Cys-41/Cys-101, and Cys-164/Cys-213. The N-linked (GlcNAc...) asparagine glycan is linked to Asn-100. Residues Arg-119, Lys-127, and Ser-129 each contribute to the N-acetylneuraminate site. The Ig-like C2-type 1 domain maps to 146 to 229; the sequence is PDIHFLEPLE…AQVTTERTVQ (84 aa). The disordered stretch occupies residues 189 to 210; sequence DPETTRSSELTLTPRPEDHGTN. Asn-210, Asn-231, and Asn-253 each carry an N-linked (GlcNAc...) asparagine glycan. The region spanning 236–330 is the Ig-like C2-type 2 domain; the sequence is PQTITIFRNG…GFLQIFLNLS (95 aa). A disulfide bridge connects residues Cys-269 and Cys-314. 4 N-linked (GlcNAc...) asparagine glycosylation sites follow: Asn-328, Asn-375, Asn-384, and Asn-393. Residues 442–462 form a helical membrane-spanning segment; it reads GGAGVMALLCICLCLIFFLIV. The Cytoplasmic portion of the chain corresponds to 463-551; it reads KARRKQAAGR…TEYSEIKTSK (89 aa). Residues 469 to 551 are disordered; sequence AAGRPEKMDD…TEYSEIKTSK (83 aa). Residues 518–523 carry the ITIM motif motif; it reads LHYASL. A compositionally biased stretch (basic and acidic residues) spans 528–537; that stretch reads MKSREPKDQE. The SLAM-like motif motif lies at 542 to 547; sequence TEYSEI.

The protein belongs to the immunoglobulin superfamily. SIGLEC (sialic acid binding Ig-like lectin) family. In terms of tissue distribution, expressed by monocytic/myeloid lineage cells. Found at high levels in peripheral blood leukocytes, spleen, bone marrow and at lower levels in lymph node, lung, appendix, placenta, pancreas and thymus. Expressed by monocytes and neutrophils but absent from leukemic cell lines representing early stages of myelomonocytic differentiation.

It localises to the membrane. Functionally, putative adhesion molecule that mediates sialic-acid dependent binding to cells. Binds equally to alpha-2,3-linked and alpha-2,6-linked sialic acid. The sialic acid recognition site may be masked by cis interactions with sialic acids on the same cell surface. This chain is Sialic acid-binding Ig-like lectin 5 (SIGLEC5), found in Homo sapiens (Human).